A 183-amino-acid polypeptide reads, in one-letter code: Beta-defensin 129 (183 aa).

A signal peptide spans M1–T19. 3 cysteine pairs are disulfide-bonded: C27–C53, C34–C48, and C38–C54. The interval T141–Q183 is disordered. A compositionally biased stretch (pro residues) spans S159–L170.

It belongs to the beta-defensin family.

It is found in the secreted. Functionally, has antibacterial activity. This Pongo pygmaeus (Bornean orangutan) protein is Beta-defensin 129 (DEFB129).